The following is a 254-amino-acid chain: Phosphoglycerate mutase 1 (254 aa).

Substrate contacts are provided by residues 10–17 and 23–24; these read RHGESAWN and SG. Catalysis depends on His11, which acts as the Tele-phosphohistidine intermediate. 2 positions are modified to phosphoserine: Ser14 and Ser23. Tyr26 carries the phosphotyrosine modification. Ser31 carries the post-translational modification Phosphoserine. Residues Arg62, 89 to 92, and Lys100 contribute to the substrate site; that span reads ERHY. The active-site Proton donor/acceptor is Glu89. Lys106 carries the N6-acetyllysine modification. 116–117 lines the substrate pocket; that stretch reads RR. Ser118 carries the post-translational modification Phosphoserine. 187–188 contacts substrate; that stretch reads GN. Lys251 bears the N6-acetyllysine; alternate mark. Residue Lys251 is modified to N6-succinyllysine; alternate. An N6-acetyllysine mark is found at Lys253 and Lys254.

It belongs to the phosphoglycerate mutase family. BPG-dependent PGAM subfamily. As to quaternary structure, homodimer. Acetylated at Lys-253, Lys-253 and Lys-254 under high glucose condition. Acetylation increases catalytic activity. Under glucose restriction SIRT1 levels dramatically increase and it deacetylates the enzyme.

The enzyme catalyses (2R)-2-phosphoglycerate = (2R)-3-phosphoglycerate. It catalyses the reaction (2R)-3-phospho-glyceroyl phosphate = (2R)-2,3-bisphosphoglycerate + H(+). Catalyzes the interconversion of 2-phosphoglycerate and 3-phosphoglyceratea crucial step in glycolysis, by using 2,3-bisphosphoglycerate. Also catalyzes the interconversion of (2R)-2,3-bisphosphoglycerate and (2R)-3-phospho-glyceroyl phosphate. This is Phosphoglycerate mutase 1 from Mus musculus (Mouse).